Consider the following 194-residue polypeptide: Phosphoheptose isomerase (194 aa).

The SIS domain maps to 37–194; it reads IAKSFKNKNK…IIEKEMKKIN (158 aa). 52-54 serves as a coordination point for substrate; the sequence is NGG. Positions 61 and 65 each coordinate Zn(2+). Substrate-binding positions include glutamate 65, 93–94, 119–121, serine 124, and glutamine 172; these read ND and STS. Positions 172 and 180 each coordinate Zn(2+).

The protein belongs to the SIS family. GmhA subfamily. As to quaternary structure, homotetramer. It depends on Zn(2+) as a cofactor.

It localises to the cytoplasm. It catalyses the reaction 2 D-sedoheptulose 7-phosphate = D-glycero-alpha-D-manno-heptose 7-phosphate + D-glycero-beta-D-manno-heptose 7-phosphate. It participates in carbohydrate biosynthesis; D-glycero-D-manno-heptose 7-phosphate biosynthesis; D-glycero-alpha-D-manno-heptose 7-phosphate and D-glycero-beta-D-manno-heptose 7-phosphate from sedoheptulose 7-phosphate: step 1/1. Catalyzes the isomerization of sedoheptulose 7-phosphate in D-glycero-D-manno-heptose 7-phosphate. This Buchnera aphidicola subsp. Schizaphis graminum (strain Sg) protein is Phosphoheptose isomerase.